Consider the following 304-residue polypeptide: Oxygen-dependent coproporphyrinogen-III oxidase (304 aa).

Ser-94 lines the substrate pocket. 2 residues coordinate a divalent metal cation: His-98 and His-108. Residue His-108 is the Proton donor of the active site. 110 to 112 (NVR) is a binding site for substrate. 2 residues coordinate a divalent metal cation: His-147 and His-177. The interval 242–277 (YVEFNLVYDRGTLFGLQTGGRTESILMSMPPLVRWQ) is important for dimerization. Substrate is bound at residue 260 to 262 (GGR).

Belongs to the aerobic coproporphyrinogen-III oxidase family. Homodimer. A divalent metal cation is required as a cofactor.

It localises to the cytoplasm. The enzyme catalyses coproporphyrinogen III + O2 + 2 H(+) = protoporphyrinogen IX + 2 CO2 + 2 H2O. It functions in the pathway porphyrin-containing compound metabolism; protoporphyrin-IX biosynthesis; protoporphyrinogen-IX from coproporphyrinogen-III (O2 route): step 1/1. In terms of biological role, involved in the heme biosynthesis. Catalyzes the aerobic oxidative decarboxylation of propionate groups of rings A and B of coproporphyrinogen-III to yield the vinyl groups in protoporphyrinogen-IX. The sequence is that of Oxygen-dependent coproporphyrinogen-III oxidase from Shewanella amazonensis (strain ATCC BAA-1098 / SB2B).